Consider the following 494-residue polypeptide: Alpha-amylase-related protein (494 aa).

The first 20 residues, 1 to 20 (MIKFALALTLCLAGASLSLA), serve as a signal peptide directing secretion. Residue Q21 is modified to Pyrrolidone carboxylic acid. An intrachain disulfide couples C48 to C104. Residues N118, Q169, and D178 each contribute to the Ca(2+) site. C157 and C171 form a disulfide bridge. R206 serves as a coordination point for chloride. Residue D208 is the Nucleophile of the active site. H212 lines the Ca(2+) pocket. E245 (proton donor) is an active-site residue. Chloride contacts are provided by N308 and R343. 3 cysteine pairs are disulfide-bonded: C376/C382, C418/C441, and C448/C460.

It belongs to the glycosyl hydrolase 13 family. Monomer. Requires Ca(2+) as cofactor. Chloride serves as cofactor.

It is found in the secreted. It carries out the reaction Endohydrolysis of (1-&gt;4)-alpha-D-glucosidic linkages in polysaccharides containing three or more (1-&gt;4)-alpha-linked D-glucose units.. The chain is Alpha-amylase-related protein (Amyrel) from Drosophila lini (Fruit fly).